We begin with the raw amino-acid sequence, 123 residues long: Large ribosomal subunit protein bL19 (123 aa).

Belongs to the bacterial ribosomal protein bL19 family.

Functionally, this protein is located at the 30S-50S ribosomal subunit interface and may play a role in the structure and function of the aminoacyl-tRNA binding site. This is Large ribosomal subunit protein bL19 from Ureaplasma urealyticum serovar 10 (strain ATCC 33699 / Western).